The primary structure comprises 60 residues: Large ribosomal subunit protein bL32 (60 aa).

The tract at residues 1–43 is disordered; sequence MAVQQNKKSPSKRGMHRSHDALTNPPLAIEPTTGEIHLRHHIS.

It belongs to the bacterial ribosomal protein bL32 family.

This is Large ribosomal subunit protein bL32 from Nitrosomonas europaea (strain ATCC 19718 / CIP 103999 / KCTC 2705 / NBRC 14298).